Consider the following 398-residue polypeptide: Carboxyaminopropylagmatine dehydrogenase (398 aa).

The protein belongs to the saccharopine dehydrogenase family.

The enzyme catalyses N(1)-[(S)-3-amino-3-carboxypropyl]agmatine + NADP(+) + H2O = L-aspartate 4-semialdehyde + agmatine + NADPH + H(+). It participates in amine and polyamine biosynthesis; spermidine biosynthesis. Dehydrogenase involved in the biosynthesis of spermidine via the carboxyaminopropylagmatine (CAPA) pathway. Catalyzes the reductive condensation of agmatine and L-aspartate-beta-semialdehyde (ASA) into CAPA. Shows activity toward putrescine and 1,3-diaminopropane, but the catalytic efficiency is three to four orders of magnitude lower than that for agmatine. Cannot use cadaverine or spermidine. This is Carboxyaminopropylagmatine dehydrogenase from Synechocystis sp. (strain ATCC 27184 / PCC 6803 / Kazusa).